The primary structure comprises 100 residues: Integration host factor subunit alpha (100 aa).

The protein belongs to the bacterial histone-like protein family. As to quaternary structure, heterodimer of an alpha and a beta chain.

Its function is as follows. This protein is one of the two subunits of integration host factor, a specific DNA-binding protein that functions in genetic recombination as well as in transcriptional and translational control. This chain is Integration host factor subunit alpha (ihfA), found in Zymomonas mobilis subsp. mobilis (strain ATCC 31821 / ZM4 / CP4).